A 248-amino-acid polypeptide reads, in one-letter code: N-acylneuraminate-9-phosphatase (248 aa).

Asp12 is a binding site for Mg(2+). Phosphate-binding residues include Leu13, Asp14, Thr131, Asn132, and Lys164. Asp14 contacts Mg(2+). Asp189 is a binding site for Mg(2+).

The protein belongs to the HAD-like hydrolase superfamily. NANP family. The cofactor is Mg(2+).

It catalyses the reaction N-acetylneuraminate 9-phosphate + H2O = N-acetylneuraminate + phosphate. The catalysed reaction is N-glycoloylneuraminate 9-phosphate + H2O = N-glycoloylneuraminate + phosphate. The protein operates within amino-sugar metabolism; N-acetylneuraminate biosynthesis. With respect to regulation, inhibited by calcium. Inhibited by vanadate, sodium orthovanadate and phosphonate. Its function is as follows. Catalyzes the dephosphorylation of N-acylneuraminate 9-phosphate (Neu5Ac-9-P) to N-acetylneuraminic acid (Neu5Ac or sialic acid). Can also use N-glycoloylneuraminate 9-phosphate as substrate. The protein is N-acylneuraminate-9-phosphatase of Rattus norvegicus (Rat).